The primary structure comprises 297 residues: Leucine-rich repeat-containing protein 25 (297 aa).

Positions 1–25 (MGSIRTRLLWLCLLMLLALLHKSGS) are cleaved as a signal peptide. Topologically, residues 26–169 (QDLTCMVHPS…SCPPSWGPGT (144 aa)) are extracellular. Asn-44 and Asn-49 each carry an N-linked (GlcNAc...) asparagine glycan. 2 LRR repeats span residues 66–89 (HAQV…DKLE) and 90–113 (KLQT…LRCD). N-linked (GlcNAc...) asparagine glycosylation is found at Asn-133 and Asn-152. The chain crosses the membrane as a helical span at residues 170-190 (IGALVAGTISLAVAVSGSVLA). Topologically, residues 191–297 (WRLLRRRRRA…VYCNLESLGR (107 aa)) are cytoplasmic. The disordered stretch occupies residues 202-244 (EHSLSKAQMSPHDIPKPVTDFLPRYSSRRPGPKAPDSPPSRFT). Phosphoserine is present on residues Ser-211, Ser-238, and Ser-267. Tyr-289 carries the post-translational modification Phosphotyrosine.

As to quaternary structure, interacts with RIGI. Interacts with SQSTM1. Interacts with p65/RELA; this interaction promotes the degradation of RELA through autophagy.

The protein localises to the membrane. The protein resides in the cytoplasm. In terms of biological role, plays a role in the inhibition of RLR-mediated type I interferon signaling pathway by targeting RIGI for autophagic degradation. Interacts specifically with ISG15-associated RIGI to promote interaction between RIGI and the autophagic cargo receptor p62/SQSTM1 to mediate RIGI degradation via selective autophagy. Plays also a role in the inhibition of NF-kappa-B signaling pathway and inflammatory response by promoting the degradation of p65/RELA. This Mus musculus (Mouse) protein is Leucine-rich repeat-containing protein 25 (Lrrc25).